A 138-amino-acid chain; its full sequence is Basic phospholipase A2 Tpu-G6D49 (138 aa).

Residues Met-1–Gly-16 form the signal peptide. 7 cysteine pairs are disulfide-bonded: Cys-42/Cys-131, Cys-44/Cys-60, Cys-59/Cys-111, Cys-65/Cys-138, Cys-66/Cys-104, Cys-73/Cys-97, and Cys-91/Cys-102. Residues Tyr-43, Gly-45, and Gly-47 each contribute to the Ca(2+) site. His-63 is an active-site residue. Position 64 (Asp-64) interacts with Ca(2+). Asp-105 is a catalytic residue.

In terms of assembly, monomer. The cofactor is Ca(2+). Expressed by the venom gland.

It is found in the secreted. It catalyses the reaction a 1,2-diacyl-sn-glycero-3-phosphocholine + H2O = a 1-acyl-sn-glycero-3-phosphocholine + a fatty acid + H(+). Functionally, snake venom phospholipase A2 (PLA2) that impairs hemostasis. It weakly inhibits ADP-induced platelet aggregation when tested on platelet rich plasma from human and rabbit blood (15-25% of inhibition at 5-10 ug of enzyme), and dose-dependently inhibits blood coagulation, possibly by inhibiting thrombin activation. Also induces local edema a few hours after injection in the hind foot. Exhibits high hydrolytic activities toward L-dipalmitoyl phosphatidylcholine. PLA2 catalyzes the calcium-dependent hydrolysis of the 2-acyl groups in 3-sn-phosphoglycerides. In Craspedocephalus puniceus (Flat-nosed pitviper), this protein is Basic phospholipase A2 Tpu-G6D49.